Consider the following 684-residue polypeptide: Probable Xaa-Pro aminopeptidase P (684 aa).

4 residues coordinate Mn(2+): D481, D492, E590, and E604.

This sequence belongs to the peptidase M24B family. It depends on Mn(2+) as a cofactor.

It catalyses the reaction Release of any N-terminal amino acid, including proline, that is linked to proline, even from a dipeptide or tripeptide.. Catalyzes the removal of a penultimate prolyl residue from the N-termini of peptides. This Neurospora crassa (strain ATCC 24698 / 74-OR23-1A / CBS 708.71 / DSM 1257 / FGSC 987) protein is Probable Xaa-Pro aminopeptidase P (ampp).